The following is a 146-amino-acid chain: Large ribosomal subunit protein bL19 (146 aa).

This sequence belongs to the bacterial ribosomal protein bL19 family.

Functionally, this protein is located at the 30S-50S ribosomal subunit interface and may play a role in the structure and function of the aminoacyl-tRNA binding site. This Bartonella bacilliformis (strain ATCC 35685 / KC583 / Herrer 020/F12,63) protein is Large ribosomal subunit protein bL19.